The sequence spans 278 residues: Deoxyribonuclease-1-like 2 (278 aa).

The N-terminal stretch at 1-21 (MGWPWAPLTAVWALGVMGATA) is a signal peptide. Active-site residues include Glu-99 and His-150. Residues Cys-189 and Cys-225 are joined by a disulfide bond.

It belongs to the DNase I family. Requires Mg(2+) as cofactor. It depends on Ca(2+) as a cofactor.

The protein localises to the cytoplasm. The protein resides in the secreted. Functionally, divalent cation-dependent acid DNA endonuclease involved in the breakdown of the nucleus during corneocyte formation of epidermal keratinocytes. May play an immune role by eliminating harmful DNA released into the extracellular environment by damaged epidermal cells. The polypeptide is Deoxyribonuclease-1-like 2 (Dnase1l2) (Mus musculus (Mouse)).